The chain runs to 357 residues: MSLTRLLIKDFRNIENADLALSPGFNFLVGANGSGKTSVLEAIYTLGHGRAFRSLQPGRVIRHEQEAFVLHGRLQGEERETSIGLTKDKQGDSKVRIDGTDGHKIAELAHLMPMQLITPEGFTLLNGGPKYRRAFLDWGCFHNEVGFFTAWSNLKRLLKQRNAALRQVSRYEQLRPWDKELIPLAEQISTWRAEYSSAIAQDMADTCQQFLPEFSLTFSFQRGWEKETDYADVLERSFERDRMLTYTAHGPHKADFRIRADGAPVEDTLSRGQLKLLMCALRLAQGEFLTRESGRRCLYLIDDFASELDDARRGLLASRLKATQSQVFVSAISAEHVIDMSDENSKMFTVEKGKITD.

Position 30-37 (30-37 (GANGSGKT)) interacts with ATP.

This sequence belongs to the RecF family.

The protein resides in the cytoplasm. Functionally, the RecF protein is involved in DNA metabolism; it is required for DNA replication and normal SOS inducibility. RecF binds preferentially to single-stranded, linear DNA. It also seems to bind ATP. The protein is DNA replication and repair protein RecF of Salmonella paratyphi B (strain ATCC BAA-1250 / SPB7).